We begin with the raw amino-acid sequence, 610 residues long: Calcium-dependent protein kinase 1 (610 aa).

A lipid anchor (N-myristoyl glycine) is attached at glycine 2. A lipid anchor (S-palmitoyl cysteine) is attached at cysteine 5. Residues 17 to 133 (VSAAMWRPRD…HMKRVSSAGL (117 aa)) form a disordered region. 2 stretches are compositionally biased toward basic and acidic residues: residues 47–56 (LRSRLSDEVQ) and 70–117 (TDVE…DPPA). A compositionally biased stretch (basic residues) spans 118–127 (KPKKPKHMKR). The region spanning 150-408 (YSLGRKLGQG…AHQVLCHPWV (259 aa)) is the Protein kinase domain. ATP is bound by residues 156–164 (LGQGQFGTT) and lysine 179. Aspartate 274 functions as the Proton acceptor in the catalytic mechanism. A Phosphoserine modification is found at serine 314. Positions 414–444 (APDKPLDSAVLSRMKQFSAMNKFKKMALRVI) are autoinhibitory domain. EF-hand domains are found at residues 451–486 (EEIAGLKEMFNMIDADKSGQITFEELKAGLKRVGAN), 487–522 (LKESEILDLMQAADVDNSGTIDYKEFIAATLHLNKI), 523–558 (EREDHLFAAFTYFDKDGSGYITPDELQQACEEFGVE), and 559–592 (DVRIEELMRDVDQDNDGRIDYNEFVAMMQKGSIT). 20 residues coordinate Ca(2+): aspartate 464, aspartate 466, serine 468, glutamine 470, glutamate 475, aspartate 500, aspartate 502, serine 504, threonine 506, glutamate 511, aspartate 536, aspartate 538, serine 540, tyrosine 542, glutamate 547, aspartate 570, aspartate 572, aspartate 574, arginine 576, and glutamate 581.

Belongs to the protein kinase superfamily. Ser/Thr protein kinase family. CDPK subfamily. As to quaternary structure, interacts with 14-3-3 proteins.

It localises to the peroxisome membrane. It catalyses the reaction L-seryl-[protein] + ATP = O-phospho-L-seryl-[protein] + ADP + H(+). It carries out the reaction L-threonyl-[protein] + ATP = O-phospho-L-threonyl-[protein] + ADP + H(+). Its activity is regulated as follows. Activated by calcium. Autophosphorylation may play an important role in the regulation of the kinase activity. Functionally, may play a role in signal transduction pathways that involve calcium as a second messenger. Phosphorylates the Ca(2+)-ATPase ACA2 resulting in the inhibition of its calcium activation. This Arabidopsis thaliana (Mouse-ear cress) protein is Calcium-dependent protein kinase 1 (CPK1).